The chain runs to 732 residues: Trehalose phosphorylase (732 aa).

Positions 1 to 25 (MAPPHQFQSKPSDVIRRRLSSAVSS) are excised as a propeptide.

It belongs to the glycosyltransferase group 1 family. Glycosyltransferase 4 subfamily. Homodimer.

It catalyses the reaction alpha,alpha-trehalose + phosphate = alpha-D-glucose + alpha-D-glucose 1-phosphate. Activity abolished by 1 mM Cu(2+). 0.1 mM Cu(2+) reduces trehalose phosphorolysis to 76% and trehalose synthesis to 48% of maximum activity. 1 mM Zn(2+) abolishes trehalose synthesis, and reduces trehalose phosphorolysis to 40% of maximum activity. Unaffected by EDTA. Reversibly catalyzes the synthesis and degradation of trehalose from glucose and alpha-D-glucose 1-phosphate. The equilibrium lies in the direction of trehalose synthesis. The sequence is that of Trehalose phosphorylase from Grifola frondosa (Maitake).